A 715-amino-acid chain; its full sequence is SANT and BTB domain regulator of class switch recombination (715 aa).

Residues 21–59 (DMILCSLVGVPQPISWDSVARLVPGYTPKECAKRFEELK) form the SANT domain. The region spanning 146-254 (MVIHVCDEAK…ECIRYCHKNM (109 aa)) is the BTB domain. Residues 552–573 (SEEEDYTTGSEVTEDEVGDEEE) are compositionally biased toward acidic residues. Disordered stretches follow at residues 552-623 (SEEE…VSLQ) and 689-715 (SAHS…GRPT). Basic residues predominate over residues 578–605 (QAGRKVKPKRSAKQTKKHISSPSIHKKE). Composition is skewed to polar residues over residues 614–623 (DSSPFTVSLQ) and 690–699 (AHSNTRQMNT).

The protein belongs to the KIAA1841 family. As to quaternary structure, homodimer.

Its function is as follows. Negatively regulates class switch recombination or isotype switching in splenic B-cells. The chain is SANT and BTB domain regulator of class switch recombination from Xenopus laevis (African clawed frog).